A 183-amino-acid chain; its full sequence is ATP synthase subunit delta (183 aa).

It belongs to the ATPase delta chain family. F-type ATPases have 2 components, F(1) - the catalytic core - and F(0) - the membrane proton channel. F(1) has five subunits: alpha(3), beta(3), gamma(1), delta(1), epsilon(1). F(0) has three main subunits: a(1), b(2) and c(10-14). The alpha and beta chains form an alternating ring which encloses part of the gamma chain. F(1) is attached to F(0) by a central stalk formed by the gamma and epsilon chains, while a peripheral stalk is formed by the delta and b chains.

It localises to the cell inner membrane. In terms of biological role, f(1)F(0) ATP synthase produces ATP from ADP in the presence of a proton or sodium gradient. F-type ATPases consist of two structural domains, F(1) containing the extramembraneous catalytic core and F(0) containing the membrane proton channel, linked together by a central stalk and a peripheral stalk. During catalysis, ATP synthesis in the catalytic domain of F(1) is coupled via a rotary mechanism of the central stalk subunits to proton translocation. This protein is part of the stalk that links CF(0) to CF(1). It either transmits conformational changes from CF(0) to CF(1) or is implicated in proton conduction. The sequence is that of ATP synthase subunit delta from Ehrlichia canis (strain Jake).